Consider the following 1575-residue polypeptide: MNILSMLSNDSAVQLQLQLQLQLQLQLNLQSAPSKASPPTLLPKQTTATTTNATGNTKTVARYSAGDINILNDENSHGVDESIDEPVTNGQATNKESVKQEPTQPTNNTETEKKPLTLSIQNGADKKSLPPQSQPPRINPLVADVTLSTSKFKNVLAHIQHDQLEIDLDYKFKFESNVSLIDQLDKNQRLSQDLRILKFDEVKSNNYLISTHQFTTNYIDRVVAEDISSRNNKISDTNKNKEIIHIDHSKPLHHNSTRGKEYKWGSTREIHKVESKPKRKRNTENSETNNSRSTVSSKASTPSKSLAFGSTHHVPIRPKGSKGTNLSSSSGPITDITNDSNNVRRSSRPKSKRKAYEDGEGEDNGNNIDSNSTDNNNRNKTQEGGRGPKRIRIKLKVKPEGENEGEEKDEGKGKGRGKGKGKGKGKGKEKDGDKEEEDENNANGENGKSKGSVSSSTTTTTTAAAAAAGGGGSTGSALGTTTSNSSTSKEQKAFMRQYDNTYVAIWKDMSRKDGPKVSRLMQQSTQAKLINLKKTCILAAREAKRWQVKNTKNQKDLSTKARRAMREMFNFWKRNERIERELKKKHEKELVEKAKREEEERESKRQSRKLNFLITQTELYSHFIGKKIKTDEIEGTDADPRIKAQEKAHLDKYAGVDAANNDILAIDFDNDDEDALHRAAAQNAQNALANAQNQAKQFDDTEPFKNPDTNGEEMNFQNPTLLGDLSIEQPKMLKCTLKEYQIKGLNWLANLYEQGINGILADEMGLGKTVQSISVLSYLAETHNIWGPFLVVTPASTLHNWQQEISKFVPNFKVLPYWGHAKDRKVLRKFWDRKSLRYDKDAPFHVLVTSYQLIVSDIAYFQKMKWQYMILDEAQAIKSSQSSRWKSLLSLSCRNRLLLTGTPIQNSMQELWALLHFIMPTLFDSHDEFSDWFSKDIESHAQSNTGLDEQQLRRLHMILKPFMLRRIKKNVQSELGDKVEIDLFCDLTNRQKKYYQSLRSQISIMDLIDATTTNSSSNNSSLDDSSTTSLVNLVMQFRKVCNHPDLFERADVRSPMALVKFAETGSFLREGNDLDVSYASENLINYNLPRLIYDDLISANENKNDFGSVYAKFSVYDPENLRDLGWISSAGTSPNEIQQLGKMNVLERAIKLQRYTTGSPLDRINYLYEGDYSSPNSKLLINPQNQHMISQQQIENSSVLLDLCNISQKVYEEMYLNTQDPAFTPLASAPPITIVCSSNNFQNKLQNELFNPTIRSALAPMSLNKELEFMNNNTPLELYPPSNMLPSSLSKVNDYSNIRMPSMDRFITESGKLAKLDELLVKLKQEDHRVLIYFQMTKMMDLMEEYLTFKQHKYIRLDGSSKLDDRRDLVHDWQTKPEIFVFLLSTRAGGLGINLTAADTVVFYDSDWNPTIDSQAMDRAHRLGQTRQVTVYRLLTRNTIEERMRDRAKQKEQVQQVVMEGKATTIMSKKEDAASKKKDVAFLLLGGSGDGDGDGTGVNSGVDTSNDVSKSTTPKPEVGKKKNNGNKKNVFGNGKKRVREEDGEEEDALNSKRLQELYHEGEGEFSGTVTPAPGV.

3 disordered regions span residues 33–57 (PSKA…TGNT), 71–116 (LNDE…KKPL), and 239–490 (KNKE…TSKE). Low complexity-rich tracts occupy residues 42–57 (LPKQ…TGNT) and 100–109 (QEPTQPTNNT). 2 stretches are compositionally biased toward basic and acidic residues: residues 239-250 (KNKEIIHIDHSK) and 258-276 (RGKE…VESK). A compositionally biased stretch (low complexity) spans 285–297 (NSETNNSRSTVSS). Positions 322–343 (KGTNLSSSSGPITDITNDSNNV) are enriched in polar residues. Residues 364–379 (NGNNIDSNSTDNNNRN) are compositionally biased toward low complexity. Composition is skewed to basic residues over residues 387–396 (GPKRIRIKLK) and 414–425 (KGRGKGKGKGKG). Low complexity-rich tracts occupy residues 441-467 (NANG…AAAA) and 475-488 (GSAL…SSTS). In terms of domain architecture, DBINO spans 505–630 (IWKDMSRKDG…SHFIGKKIKT (126 aa)). The interval 690–718 (NAQNQAKQFDDTEPFKNPDTNGEEMNFQN) is disordered. Positions 749–921 (ANLYEQGING…WALLHFIMPT (173 aa)) constitute a Helicase ATP-binding domain. Position 762-769 (762-769 (DEMGLGKT)) interacts with ATP. The DEAQ box motif lies at 872–875 (DEAQ). The 156-residue stretch at 1315-1470 (KLDELLVKLK…GKATTIMSKK (156 aa)) folds into the Helicase C-terminal domain. Gly residues predominate over residues 1488–1498 (SGDGDGDGTGV). Residues 1488 to 1549 (SGDGDGDGTG…EEDGEEEDAL (62 aa)) form a disordered region. Polar residues predominate over residues 1505 to 1514 (SNDVSKSTTP).

Belongs to the SNF2/RAD54 helicase family. In terms of assembly, component of the INO80 chromatin-remodeling complex.

Its subcellular location is the nucleus. The catalysed reaction is ATP + H2O = ADP + phosphate + H(+). ATPase component of the INO80 complex which remodels chromatin by shifting nucleosomes and is involved in DNA repair. The sequence is that of Chromatin-remodeling ATPase INO80 (INO80) from Lodderomyces elongisporus (strain ATCC 11503 / CBS 2605 / JCM 1781 / NBRC 1676 / NRRL YB-4239) (Yeast).